The chain runs to 388 residues: Na(+)/H(+) antiporter NhaA (388 aa).

12 consecutive transmembrane segments (helical) span residues 8 to 28 (FLKL…IALI), 33 to 53 (PLQG…FAAL), 59 to 79 (LLLW…GLEV), 95 to 115 (LFPV…YLLF), 125 to 145 (GWAI…ALLS), 154 to 174 (VFLL…IALF), 179 to 199 (VSLV…WMNW), 217 to 237 (VCIL…GFLI), 259 to 279 (VAYL…LNGV), 287 to 307 (ILPL…IFLF), 328 to 348 (IFAV…ISGL), and 363 to 383 (LGIL…LRMV).

Belongs to the NhaA Na(+)/H(+) (TC 2.A.33) antiporter family.

It localises to the cell inner membrane. The enzyme catalyses Na(+)(in) + 2 H(+)(out) = Na(+)(out) + 2 H(+)(in). Na(+)/H(+) antiporter that extrudes sodium in exchange for external protons. The sequence is that of Na(+)/H(+) antiporter NhaA from Photorhabdus laumondii subsp. laumondii (strain DSM 15139 / CIP 105565 / TT01) (Photorhabdus luminescens subsp. laumondii).